A 451-amino-acid chain; its full sequence is Serine--tRNA ligase (451 aa).

An L-serine-binding site is contributed by 258–260; that stretch reads TSE. ATP is bound at residue 289–291; that stretch reads RSE. Glu312 is a binding site for L-serine. Position 376–379 (376–379) interacts with ATP; the sequence is EISS. An L-serine-binding site is contributed by Ser411.

Belongs to the class-II aminoacyl-tRNA synthetase family. Type-1 seryl-tRNA synthetase subfamily. As to quaternary structure, homodimer. The tRNA molecule binds across the dimer.

The protein localises to the cytoplasm. It carries out the reaction tRNA(Ser) + L-serine + ATP = L-seryl-tRNA(Ser) + AMP + diphosphate + H(+). The enzyme catalyses tRNA(Sec) + L-serine + ATP = L-seryl-tRNA(Sec) + AMP + diphosphate + H(+). The protein operates within aminoacyl-tRNA biosynthesis; selenocysteinyl-tRNA(Sec) biosynthesis; L-seryl-tRNA(Sec) from L-serine and tRNA(Sec): step 1/1. Its function is as follows. Catalyzes the attachment of serine to tRNA(Ser). Is also able to aminoacylate tRNA(Sec) with serine, to form the misacylated tRNA L-seryl-tRNA(Sec), which will be further converted into selenocysteinyl-tRNA(Sec). In Bordetella pertussis (strain Tohama I / ATCC BAA-589 / NCTC 13251), this protein is Serine--tRNA ligase.